Here is a 221-residue protein sequence, read N- to C-terminus: GTP cyclohydrolase III (221 aa).

It belongs to the archaeal-type GTP cyclohydrolase family.

The catalysed reaction is GTP + 3 H2O = 2-amino-5-formylamino-6-(5-phospho-D-ribosylamino)pyrimidin-4(3H)-one + 2 phosphate + 2 H(+). In terms of biological role, catalyzes the formation of 2-amino-5-formylamino-6-ribofuranosylamino-4(3H)-pyrimidinone ribonucleotide monophosphate and inorganic phosphate from GTP. Also has an independent pyrophosphate phosphohydrolase activity. The sequence is that of GTP cyclohydrolase III from Pyrobaculum arsenaticum (strain DSM 13514 / JCM 11321 / PZ6).